A 1800-amino-acid chain; its full sequence is U3 small nucleolar RNA-associated protein 10 (1800 aa).

HEAT repeat units follow at residues 426 to 467 and 581 to 619; these read FTQS…TTPA and DVDL…LYKK. The next 2 membrane-spanning stretches (helical) occupy residues 944-964 and 1000-1020; these read IQSG…AIVN and ALLL…HSVM. HEAT repeat units follow at residues 1043-1081, 1250-1288, 1294-1333, and 1755-1793; these read DQTI…AFEH, TLSL…QNPE, QHRM…KYGR, and LALL…VLGE.

It belongs to the HEATR1/UTP10 family. In terms of assembly, component of the ribosomal small subunit (SSU) processome.

It localises to the nucleus. Its subcellular location is the nucleolus. It is found in the membrane. Involved in nucleolar processing of pre-18S ribosomal RNA. Involved in ribosome biosynthesis. This chain is U3 small nucleolar RNA-associated protein 10, found in Aspergillus niger (strain ATCC MYA-4892 / CBS 513.88 / FGSC A1513).